The sequence spans 283 residues: Glutamate racemase (283 aa).

Substrate is bound by residues 7-8 (DS) and 39-40 (YG). Catalysis depends on C70, which acts as the Proton donor/acceptor. 71–72 (NT) contacts substrate. The active-site Proton donor/acceptor is C206. 207–208 (TH) provides a ligand contact to substrate.

It belongs to the aspartate/glutamate racemases family.

The enzyme catalyses L-glutamate = D-glutamate. It functions in the pathway cell wall biogenesis; peptidoglycan biosynthesis. Its function is as follows. Provides the (R)-glutamate required for cell wall biosynthesis. This is Glutamate racemase from Caulobacter sp. (strain K31).